The primary structure comprises 308 residues: GTP-binding protein RAD (308 aa).

A compositionally biased stretch (gly residues) spans Met1 to Ala15. The disordered stretch occupies residues Met1–Gly86. Omega-N-methylarginine is present on Arg24. Ser26 is modified (phosphoserine). The segment covering Ala57 to Ser82 has biased composition (low complexity). GTP-binding positions include Gly98–Ser105 and Asn203–Asp206. Residues Ala278–Ala297 form a calmodulin-binding region.

Belongs to the small GTPase superfamily. RGK family. Interacts with Calmodulin preferentially in the inactive, GDP-bound form. Interacts with CAMK2D. Interacts with CACNB2; interaction may be involved in beta-adrenergic regulation of heart rate and contractile force. Interaction with CACNB2 regulates the trafficking of CACNA1C to the cell membrane. In terms of processing, phosphorylation at Ser-26, Ser-39, Ser-273 and Ser-301 may be involved in regulating inhibition of voltage-gated L-type Ca(2+) channels.

It localises to the cell membrane. Functionally, may regulate basal voltage-dependent L-type Ca(2+) currents and be required for beta-adrenergic augmentation of Ca(2+) influx in cardiomyocytes, thereby regulating increases in heart rate and contractile force. May play an important role in cardiac antiarrhythmia via the strong suppression of voltage-dependent L-type Ca(2+) currents. Regulates voltage-gated L-type calcium channel subunit alpha-1C trafficking to the cell membrane. Inhibits cardiac hypertrophy through the calmodulin-dependent kinase II (CaMKII) pathway. Inhibits phosphorylation and activation of CAMK2D. This is GTP-binding protein RAD (Rrad) from Mus musculus (Mouse).